The sequence spans 382 residues: Chaperone protein DnaJ (382 aa).

The region spanning 5–69 (DYYEILGVSK…EKRARYDRFG (65 aa)) is the J domain. The segment at 137–219 (GKETEIEIPR…CGGTGRVKRR (83 aa)) adopts a CR-type zinc-finger fold. Zn(2+)-binding residues include C150, C153, C167, C170, C193, C196, C207, and C210. CXXCXGXG motif repeat units lie at residues 150–157 (CDTCQGSG), 167–174 (CPHCHGSG), 193–200 (CPVCGGTG), and 207–214 (CPTCGGTG). The segment at 154–175 (QGSGAKPGTSPTSCPHCHGSGQ) is disordered.

The protein belongs to the DnaJ family. As to quaternary structure, homodimer. It depends on Zn(2+) as a cofactor.

The protein resides in the cytoplasm. Its function is as follows. Participates actively in the response to hyperosmotic and heat shock by preventing the aggregation of stress-denatured proteins and by disaggregating proteins, also in an autonomous, DnaK-independent fashion. Unfolded proteins bind initially to DnaJ; upon interaction with the DnaJ-bound protein, DnaK hydrolyzes its bound ATP, resulting in the formation of a stable complex. GrpE releases ADP from DnaK; ATP binding to DnaK triggers the release of the substrate protein, thus completing the reaction cycle. Several rounds of ATP-dependent interactions between DnaJ, DnaK and GrpE are required for fully efficient folding. Also involved, together with DnaK and GrpE, in the DNA replication of plasmids through activation of initiation proteins. In Geobacillus kaustophilus (strain HTA426), this protein is Chaperone protein DnaJ.